Consider the following 567-residue polypeptide: NAC domain-containing protein 78 (567 aa).

Residues 9 to 159 (LAPGFRFHPT…AYVLCRIFQK (151 aa)) enclose the NAC domain. The DNA-binding element occupies 108 to 165 (VGMKKTLVYHKGRAPRGERTNWVMHEYRLSDEDLKKAGVPQEAYVLCRIFQKSGTGPK). A disordered region spans residues 393-436 (NQEALDQKPAPKELEKEVAGGKEAVEEKESGEGSSSKQDTDFKD). Positions 397–423 (LDQKPAPKELEKEVAGGKEAVEEKESG) are enriched in basic and acidic residues. The chain crosses the membrane as a helical span at residues 544–564 (LVFMCLWVLLLSVSFKIVTMV).

In terms of tissue distribution, expressed in root meristem. Expressed in roots, rosette leaves, cauline leaves, shoot apex, stems and flowers.

The protein localises to the membrane. It is found in the nucleus. In terms of biological role, transcriptional activator activated by proteolytic cleavage through regulated intramembrane proteolysis (RIP). Transcripition activator associated with the induction of genes related to flavonoid biosynthesis and required for the accumulation of anthocyanins in response to high light stress. Plays a role in the regulation of 20S and 26S proteasomes in response to high light stress. The protein is NAC domain-containing protein 78 (NAC078) of Arabidopsis thaliana (Mouse-ear cress).